The sequence spans 434 residues: Mitochondrial distribution and morphology protein 12 (434 aa).

The region spanning 1–434 (MSIDIDWERA…VYPSFWTFLV (434 aa)) is the SMP-LTD domain. The span at 70–83 (YEEDDNENFSESSE) shows a compositional bias: acidic residues. Disordered regions lie at residues 70 to 141 (YEED…LRSP) and 181 to 277 (TPLG…LPPR). Positions 86-97 (SPTREPVDRYGS) are enriched in basic and acidic residues. Polar residues predominate over residues 215–237 (SAQSRPSTANTGNTLLSRGSMSS).

It belongs to the MDM12 family. As to quaternary structure, component of the ER-mitochondria encounter structure (ERMES) or MDM complex, composed of MMM1, MDM10, MDM12 and MDM34. An MMM1 homodimer associates with one molecule of MDM12 on each side in a pairwise head-to-tail manner, and the SMP-LTD domains of MMM1 and MDM12 generate a continuous hydrophobic tunnel for phospholipid trafficking.

Its subcellular location is the mitochondrion outer membrane. The protein resides in the endoplasmic reticulum membrane. In terms of biological role, component of the ERMES/MDM complex, which serves as a molecular tether to connect the endoplasmic reticulum (ER) and mitochondria. Components of this complex are involved in the control of mitochondrial shape and protein biogenesis, and function in nonvesicular lipid trafficking between the ER and mitochondria. MDM12 is required for the interaction of the ER-resident membrane protein MMM1 and the outer mitochondrial membrane-resident beta-barrel protein MDM10. The MDM12-MMM1 subcomplex functions in the major beta-barrel assembly pathway that is responsible for biogenesis of all mitochondrial outer membrane beta-barrel proteins, and acts in a late step after the SAM complex. The MDM10-MDM12-MMM1 subcomplex further acts in the TOM40-specific pathway after the action of the MDM12-MMM1 complex. Essential for establishing and maintaining the structure of mitochondria and maintenance of mtDNA nucleoids. The chain is Mitochondrial distribution and morphology protein 12 from Ajellomyces dermatitidis (strain ER-3 / ATCC MYA-2586) (Blastomyces dermatitidis).